The chain runs to 367 residues: tRNA N6-adenosine threonylcarbamoyltransferase (367 aa).

Fe cation-binding residues include His123 and His127. Substrate contacts are provided by residues 145–149 (LVSGG), Asp178, Gly191, and Asn288. Position 316 (Asp316) interacts with Fe cation.

Belongs to the KAE1 / TsaD family. Requires Fe(2+) as cofactor.

It localises to the cytoplasm. The enzyme catalyses L-threonylcarbamoyladenylate + adenosine(37) in tRNA = N(6)-L-threonylcarbamoyladenosine(37) in tRNA + AMP + H(+). In terms of biological role, required for the formation of a threonylcarbamoyl group on adenosine at position 37 (t(6)A37) in tRNAs that read codons beginning with adenine. Is involved in the transfer of the threonylcarbamoyl moiety of threonylcarbamoyl-AMP (TC-AMP) to the N6 group of A37, together with TsaE and TsaB. TsaD likely plays a direct catalytic role in this reaction. This chain is tRNA N6-adenosine threonylcarbamoyltransferase, found in Caulobacter vibrioides (strain ATCC 19089 / CIP 103742 / CB 15) (Caulobacter crescentus).